A 591-amino-acid polypeptide reads, in one-letter code: A-type ATP synthase subunit A (591 aa).

233–240 (GPFGSGKT) provides a ligand contact to ATP.

Belongs to the ATPase alpha/beta chains family. As to quaternary structure, has multiple subunits with at least A(3), B(3), C, D, E, F, H, I and proteolipid K(x).

It localises to the cell membrane. The enzyme catalyses ATP + H2O + 4 H(+)(in) = ADP + phosphate + 5 H(+)(out). Its function is as follows. Component of the A-type ATP synthase that produces ATP from ADP in the presence of a proton gradient across the membrane. The A chain is the catalytic subunit. This is A-type ATP synthase subunit A from Metallosphaera sedula (strain ATCC 51363 / DSM 5348 / JCM 9185 / NBRC 15509 / TH2).